Here is a 223-residue protein sequence, read N- to C-terminus: Urease accessory protein UreF (223 aa).

The protein belongs to the UreF family. UreD, UreF and UreG form a complex that acts as a GTP-hydrolysis-dependent molecular chaperone, activating the urease apoprotein by helping to assemble the nickel containing metallocenter of UreC. The UreE protein probably delivers the nickel.

It localises to the cytoplasm. Required for maturation of urease via the functional incorporation of the urease nickel metallocenter. The sequence is that of Urease accessory protein UreF from Rhizobium meliloti (strain 1021) (Ensifer meliloti).